A 294-amino-acid chain; its full sequence is 33 kDa chaperonin (294 aa).

2 cysteine pairs are disulfide-bonded: C238–C240 and C271–C274.

This sequence belongs to the HSP33 family. In terms of processing, under oxidizing conditions two disulfide bonds are formed involving the reactive cysteines. Under reducing conditions zinc is bound to the reactive cysteines and the protein is inactive.

It localises to the cytoplasm. Its function is as follows. Redox regulated molecular chaperone. Protects both thermally unfolding and oxidatively damaged proteins from irreversible aggregation. Plays an important role in the bacterial defense system toward oxidative stress. The sequence is that of 33 kDa chaperonin from Clostridium novyi (strain NT).